Reading from the N-terminus, the 975-residue chain is Glycine dehydrogenase (decarboxylating) (975 aa).

K723 bears the N6-(pyridoxal phosphate)lysine mark.

This sequence belongs to the GcvP family. As to quaternary structure, the glycine cleavage system is composed of four proteins: P, T, L and H. The cofactor is pyridoxal 5'-phosphate.

It catalyses the reaction N(6)-[(R)-lipoyl]-L-lysyl-[glycine-cleavage complex H protein] + glycine + H(+) = N(6)-[(R)-S(8)-aminomethyldihydrolipoyl]-L-lysyl-[glycine-cleavage complex H protein] + CO2. In terms of biological role, the glycine cleavage system catalyzes the degradation of glycine. The P protein binds the alpha-amino group of glycine through its pyridoxal phosphate cofactor; CO(2) is released and the remaining methylamine moiety is then transferred to the lipoamide cofactor of the H protein. In Burkholderia thailandensis (strain ATCC 700388 / DSM 13276 / CCUG 48851 / CIP 106301 / E264), this protein is Glycine dehydrogenase (decarboxylating).